Consider the following 143-residue polypeptide: Hemoglobin subunit alpha (143 aa).

Residue S2 is modified to N-acetylserine. A Globin domain is found at 2–143 (SLSDKDKAAV…VALALAEKYR (142 aa)). Position 60 (H60) interacts with O2. H89 is a binding site for heme b.

It belongs to the globin family. Heterotetramer of two alpha chains and two beta chains. As to expression, red blood cells.

In terms of biological role, involved in oxygen transport from the lung to the various peripheral tissues. This Artedidraco orianae (Barbeled plunderfish) protein is Hemoglobin subunit alpha (hba).